Consider the following 310-residue polypeptide: MKKCRFLVLLLLAFVGLAACSSQKSSTETGSSKLNVVATNSIIADITKNIAGDKINLHSIVPVGQDPHEYEPLPEDVKKTSQADLIFYNGINLETGGNAWFTKLVENAKKKENKDYYAVSEGVDVIYLEGQSEKGKEDPHAWLNLENGIIYAQNIAKRLSEKDPANKETYEKNLKAYVEKLSALDKEAKEKFNNIPGEKKMIVTSEGCFKYFSKAYNVPSAYIWEINTEEEGTPDQIKTLVEKLRKTKVPSLFVESSVDDRPMKTVSKDTNIPIYAKIFTDSVAEKGEEGDSYYSMMKYNLEKIAEGLSK.

Residues 1–19 form the signal peptide; the sequence is MKKCRFLVLLLLAFVGLAA. Residue cysteine 20 is the site of N-palmitoyl cysteine attachment. Residue cysteine 20 is the site of S-diacylglycerol cysteine attachment. 4 residues coordinate a divalent metal cation: histidine 68, histidine 140, glutamate 206, and aspartate 281.

It belongs to the bacterial solute-binding protein 9 family.

It is found in the cell membrane. Functionally, part of an ATP-binding cassette (ABC) transport system involved in metal import. Binds a metal with high affinity and specificity and delivers it to the membrane permease for translocation into the cytoplasm. Part of an ATP-driven transport system for manganese. Does not exhibit adhesion properties. This chain is Metal ABC transporter substrate-binding lipoprotein ScbA (scbA), found in Streptococcus cristatus.